Here is a 1195-residue protein sequence, read N- to C-terminus: Phosphatidylinositol-3,5-bisphosphate 3-phosphatase MTMR4 (1195 aa).

Position 8 is a phosphoserine (serine 8). The Myotubularin phosphatase domain maps to 153–570 (EHIRCRQEAE…RALHLWTAVY (418 aa)). The a 1,2-diacyl-sn-glycero-3-phospho-(1D-myo-inositol-3,5-bisphosphate) site is built by asparagine 320, asparagine 345, and isoleucine 346. Positions 320, 345, and 346 each coordinate a 1,2-diacyl-sn-glycero-3-phospho-(1D-myo-inositol-3-phosphate). Residue cysteine 407 is the Phosphocysteine intermediate of the active site. Residues serine 408, aspartate 409, glycine 410, tryptophan 411, aspartate 412, arginine 413, lysine 449, and arginine 453 each coordinate a 1,2-diacyl-sn-glycero-3-phospho-(1D-myo-inositol-3,5-bisphosphate). Residues serine 408, aspartate 409, glycine 410, tryptophan 411, aspartate 412, and arginine 413 each coordinate a 1,2-diacyl-sn-glycero-3-phospho-(1D-myo-inositol-3-phosphate). Arginine 453 is a binding site for a 1,2-diacyl-sn-glycero-3-phospho-(1D-myo-inositol-3-phosphate). Phosphoserine occurs at positions 610 and 629. Disordered regions lie at residues 645–756 (EPWH…EHCP), 780–800 (ESSQ…SMLG), and 827–877 (DPST…LLEN). Positions 720-729 (PEIKVLEETK) are enriched in basic and acidic residues. Polar residues-rich tracts occupy residues 780-795 (ESSQ…QAQP) and 831-854 (DFLN…SSVP). Positions 1004–1008 (VPPLY) match the PY-motif; substrate motif for NEDD4 motif. The stretch at 1023–1055 (HRLRQIEAGYKQEVEQLRRQVRELQMRLDIRHC) forms a coiled coil. Residues 1114-1174 (DHMASHCYNC…VCNSCYEHIQ (61 aa)) form an FYVE-type zinc finger. Zn(2+) is bound by residues cysteine 1120, cysteine 1123, cysteine 1136, cysteine 1139, cysteine 1144, cysteine 1147, cysteine 1166, and cysteine 1169.

It belongs to the protein-tyrosine phosphatase family. Non-receptor class myotubularin subfamily. Homooligomeric. Forms MTMR3:MTMR4 heterooligomers; regulates the localization of both proteins. The MTMR3:MTMR4 heterooligomer can also recruit both CEP55 and PLK1; occurs during early mitosis, regulates the phosphorylation of CEP55 by PLK1 and its recruitment to the midbody where it can mediate cell abscission. Interacts with SMAD2 and SMAD3; negatively regulates TGF-beta signaling through SMAD2 and SMAD3 dephosphorylation and retention in endosomes. Interacts with SMAD1; negatively regulates BMP signaling through SMAD1 dephosphorylation and retention in endosomes. Ubiquitinated. Ubiquitination by NEDD4 probably leads to proteasomal degradation. Post-translationally, phosphorylated by CDK1 during mitosis. In terms of tissue distribution, expressed in brain, heart, kidney, spleen, liver, colon, testis, muscle, placenta, thyroid gland, pancreas, ovary, prostate, skin, peripheral blood, and bone marrow.

The protein resides in the early endosome membrane. The protein localises to the recycling endosome membrane. Its subcellular location is the late endosome membrane. It localises to the cytoplasmic vesicle. It is found in the phagosome membrane. It catalyses the reaction a 1,2-diacyl-sn-glycero-3-phospho-(1D-myo-inositol-3-phosphate) + H2O = a 1,2-diacyl-sn-glycero-3-phospho-(1D-myo-inositol) + phosphate. It carries out the reaction a 1,2-diacyl-sn-glycero-3-phospho-(1D-myo-inositol-3,5-bisphosphate) + H2O = a 1,2-diacyl-sn-glycero-3-phospho-(1D-myo-inositol-5-phosphate) + phosphate. The catalysed reaction is 1,2-dioctanoyl-sn-glycero-3-phospho-(1-D-myo-inositol-3-phosphate) + H2O = 1,2-dioctanoyl-sn-glycero-3-phospho-(1D-myo-inositol) + phosphate. The enzyme catalyses 1,2-dioctanoyl-sn-glycero-3-phospho-(1D-myo-inositol-3,5-bisphosphate) + H2O = 1,2-dioctanoyl-sn-glycero-3-phospho-(1D-myo-inositol-5-phosphate) + phosphate. The phosphatidylinositol-3-phosphate phosphatase activity is inhibited by vanadate. Lipid phosphatase that specifically dephosphorylates the D-3 position of phosphatidylinositol 3-phosphate and phosphatidylinositol 3,5-bisphosphate, generating phosphatidylinositol and phosphatidylinositol 5-phosphate. Decreases the levels of phosphatidylinositol 3-phosphate, a phospholipid found in cell membranes where it acts as key regulator of both cell signaling and intracellular membrane traffic, in a subset of endosomal membranes to negatively regulate both endocytic recycling and trafficking and/or maturation of endosomes toward lysosomes. Through phosphatidylinositol 3-phosphate turnover in phagosome membranes regulates phagocytosis and phagosome maturation. By decreasing phosphatidylinositol 3-monophosphate (PI3P) levels in immune cells it can also regulate the innate immune response. Beside its lipid phosphatase activity, can also function as a molecular adapter to regulate midbody abscission during mitotic cytokinesis. Can also negatively regulate TGF-beta and BMP signaling through Smad proteins dephosphorylation and retention in endosomes. This is Phosphatidylinositol-3,5-bisphosphate 3-phosphatase MTMR4 from Homo sapiens (Human).